We begin with the raw amino-acid sequence, 592 residues long: Syntaxin-binding protein 3 (592 aa).

The segment at 1–255 is mediates interaction with DOC2B; sequence MAPPVAERGL…STVLHELTFQ (255 aa).

The protein belongs to the STXBP/unc-18/SEC1 family. In terms of assembly, interacts with DOC2B; the interaction is direct, occurs at the cell membrane, excludes interaction with STX4 and regulates glucose-stimulated insulin secretion. Interacts with STX4. Post-translationally, phosphorylated by PKC in platelets in response to thrombin stimulation; phosphorylation inhibits binding to STX4. Megakaryocytes and platelets.

It localises to the cytoplasm. The protein localises to the cytosol. The protein resides in the cell membrane. Its function is as follows. Together with STX4 and VAMP2, may play a role in insulin-dependent movement of GLUT4 and in docking/fusion of intracellular GLUT4-containing vesicles with the cell surface in adipocytes. The protein is Syntaxin-binding protein 3 (STXBP3) of Homo sapiens (Human).